The primary structure comprises 323 residues: MEETEEELRPCKICGRTFFPATLKKHVPICQKTSVKKRKTFESSRQRAEGTDINTVKPVKPRPEPPKKQSNWKRKHEEFIATIRSAKGISQILKEGGELPPPPPPSYDPDYVQCPYCQRRFNQNAADRHINFCKEQSARMGQKIKGGTDPKRKPTVRPQYKPPSLKTDSPAAVSSPASRLPQPPNFGKPTSGIPSGKSVANSGAPGNKYQTQSPAHKNSTMVTSPQAGGALKARTPPSLVKNPSSGTSFNKRKTYNAENNARPEAAMGYDSSDYSKPLNDGHIRAADNNMSGQLTKFCHECGTKYPVEWAKFCCECGVRRMVL.

The segment at 7 to 36 (ELRPCKICGRTFFPATLKKHVPICQKTSVK) adopts a C2HC/C3H-type 1 zinc-finger fold. Zn(2+) contacts are provided by Cys-11, Cys-14, His-26, and Cys-30. The segment at 35 to 75 (VKKRKTFESSRQRAEGTDINTVKPVKPRPEPPKKQSNWKRK) is disordered. A compositionally biased stretch (basic and acidic residues) spans 40 to 50 (TFESSRQRAEG). The C2HC/C3H-type 2 zinc-finger motif lies at 110–139 (DYVQCPYCQRRFNQNAADRHINFCKEQSAR). Zn(2+)-binding residues include Cys-114, Cys-117, His-129, and Cys-133. A disordered region spans residues 138–273 (ARMGQKIKGG…EAAMGYDSSD (136 aa)). Positions 208 to 226 (KYQTQSPAHKNSTMVTSPQ) are enriched in polar residues.

The protein belongs to the ZC2HC1 family. Zn(2+) serves as cofactor.

This is Zinc finger C2HC domain-containing protein 1A (zc2hc1a) from Xenopus laevis (African clawed frog).